We begin with the raw amino-acid sequence, 170 residues long: Myosin regulatory light chain 2, skeletal muscle isoform type 1 (170 aa).

N,N,N-trimethylalanine is present on A2. Residues S16 and S17 each carry the phosphoserine modification. Residues T26 and T36 each carry the phosphothreonine modification. An EF-hand 1 domain is found at 26–61 (TQIQEFKEAFTVIDQNRDGIIDKEDLRDTFAAMGRL). The Ca(2+) site is built by D39, N41, D43, and D50. Residue S76 is modified to Phosphoserine. 2 consecutive EF-hand domains span residues 96–131 (DPED…QCDR) and 132–167 (FSQE…GDAK). At T102 the chain carries Phosphothreonine.

As to quaternary structure, myosin is a hexamer of 2 heavy chains and 4 light chains.

The polypeptide is Myosin regulatory light chain 2, skeletal muscle isoform type 1 (Oryctolagus cuniculus (Rabbit)).